Reading from the N-terminus, the 259-residue chain is 3-deoxy-manno-octulosonate cytidylyltransferase (259 aa).

The protein belongs to the KdsB family.

Its subcellular location is the cytoplasm. The enzyme catalyses 3-deoxy-alpha-D-manno-oct-2-ulosonate + CTP = CMP-3-deoxy-beta-D-manno-octulosonate + diphosphate. It participates in nucleotide-sugar biosynthesis; CMP-3-deoxy-D-manno-octulosonate biosynthesis; CMP-3-deoxy-D-manno-octulosonate from 3-deoxy-D-manno-octulosonate and CTP: step 1/1. The protein operates within bacterial outer membrane biogenesis; lipopolysaccharide biosynthesis. In terms of biological role, activates KDO (a required 8-carbon sugar) for incorporation into bacterial lipopolysaccharide in Gram-negative bacteria. This Xanthomonas axonopodis pv. citri (strain 306) protein is 3-deoxy-manno-octulosonate cytidylyltransferase.